The primary structure comprises 106 residues: Testis-specific basic protein Y 2 (106 aa).

It belongs to the VCX/VCY family. In terms of assembly, interacts with MAP1S. Interacts with UBE3A (via HECT domain). As to expression, expressed exclusively in testis. Expressed in ejaculated spermatozoa of germ cell. Expressed in the nuclei of spermatogonia, spermatocytes, and round spermatids, except elongated spermatids (at protein level).

This is Testis-specific basic protein Y 2 (BPY2) from Homo sapiens (Human).